The sequence spans 691 residues: MPRQFPLEKTRNIGIMAHIDAGKTTTTERILFYTGKVHKMGEVHEGTATMDWMEQEQERGITITSAATTCEWKGHRINIIDTPGHVDFTVEVERSLRVLDGAIAVFCAKGGVEPQSETVWRQADKYRVPRIAYVNKMDIMGANFFNVIEMMKERLGANPVAIQVPIGKEDTFRGIVDLLTMKAIIYVDDLGKVSQETDIPEEVKDIAEEYRIKLLEAVAETDEEIMVKYLEGEEITVEELKAAIRKATINMQMTPVLCGSSYRNKGVQPLLDAVVDYLPSPVDIAAVKGFSPDTGEEIERKTSEDEPFCALAFKIMSDPYVGKLTFLRVYSGVLHAGSYVYNSTKNKKERVGRLLHMHANHREDVDAVYAGDICAAIGLSNTTTGDTLCDENHPIVLESMEFPEPVIQVAIEPKTKADQEKMGIALQRLAEEDPTFKVSTNHETGQTLIAGMGELHLEIIVDRMRREFKVEVNVGKPQVAYKETIKKSVKVEGKYIRQSGGRGQYGHVWLELEPLERGAGYEFVNKIVGGVIPKEFIPSVDAGVQEAMQSGVLAGYPVVDVRVTLFDGSYHEVDSSDMAFRIAAAQAFREGMKKADPVLLEPIMKVEVVVPEEYMGDVMGDINSRRGRIEGMELRGNAQVIRAYVPLAEMFGYATDLRSKTQGRGTYTMQFDHYEEVPKNIADKILEMKNK.

Positions 8-282 constitute a tr-type G domain; that stretch reads EKTRNIGIMA…AVVDYLPSPV (275 aa). Residues 17–24, 81–85, and 135–138 each bind GTP; these read AHIDAGKT, DTPGH, and NKMD.

It belongs to the TRAFAC class translation factor GTPase superfamily. Classic translation factor GTPase family. EF-G/EF-2 subfamily.

The protein resides in the cytoplasm. Functionally, catalyzes the GTP-dependent ribosomal translocation step during translation elongation. During this step, the ribosome changes from the pre-translocational (PRE) to the post-translocational (POST) state as the newly formed A-site-bound peptidyl-tRNA and P-site-bound deacylated tRNA move to the P and E sites, respectively. Catalyzes the coordinated movement of the two tRNA molecules, the mRNA and conformational changes in the ribosome. This is Elongation factor G from Caldicellulosiruptor bescii (strain ATCC BAA-1888 / DSM 6725 / KCTC 15123 / Z-1320) (Anaerocellum thermophilum).